The chain runs to 287 residues: Pyridoxal kinase PdxY (287 aa).

Substrate-binding positions include Ser9 and 44–45 (MQ). ATP-binding residues include Asp111, Ala142, Glu147, and Lys180. Residue Asp221 coordinates substrate.

It belongs to the pyridoxine kinase family. PdxY subfamily. In terms of assembly, homodimer. Requires Mg(2+) as cofactor.

It catalyses the reaction pyridoxal + ATP = pyridoxal 5'-phosphate + ADP + H(+). It functions in the pathway cofactor metabolism; pyridoxal 5'-phosphate salvage; pyridoxal 5'-phosphate from pyridoxal: step 1/1. Functionally, pyridoxal kinase involved in the salvage pathway of pyridoxal 5'-phosphate (PLP). Catalyzes the phosphorylation of pyridoxal to PLP. This is Pyridoxal kinase PdxY from Burkholderia mallei (strain ATCC 23344).